The chain runs to 314 residues: Olfactory receptor 5G29 (314 aa).

Residues 1 to 25 lie on the Extracellular side of the membrane; that stretch reads MEEKNQTIVMEFFFLGLTDHLYQKI. A glycan (N-linked (GlcNAc...) asparagine) is linked at N5. A helical transmembrane segment spans residues 26-46; sequence ALFITILFVYLVTLGGNLGMI. At 47–54 the chain is on the cytoplasmic side; it reads TLIWADPR. A helical transmembrane segment spans residues 55–75; sequence LHTPMYFFLSHLSFVDMCSSS. Residues 76–99 are Extracellular-facing; sequence SIAPKMLCDIFAEEKRISFMGCAA. C97 and C189 are joined by a disulfide. A helical membrane pass occupies residues 100–120; that stretch reads QMWFFGFFVGTECFLLASMAY. Topologically, residues 121-133 are cytoplasmic; sequence DRYTAICKPLLYT. The chain crosses the membrane as a helical span at residues 134 to 154; the sequence is LLMSQRVCVHLVVGPYVFAII. The Extracellular segment spans residues 155 to 196; the sequence is NITTHTTLAFCLPFCGSNTINHFFCDVSPLLSLACADSWVNK. The chain crosses the membrane as a helical span at residues 197-217; the sequence is VVLFVLSGAIGVFSGLIIIVS. At 218 to 237 the chain is on the cytoplasmic side; it reads YVSILMTIFKIQTADGKQKA. Residues 238-258 form a helical membrane-spanning segment; sequence FSTCSSHLSAVSILYGTLFFI. The Extracellular portion of the chain corresponds to 259–271; that stretch reads YVRPSASFSLNIN. Residues 272-292 traverse the membrane as a helical segment; it reads KMISLFYTVVIPMLNPLIYSL. Topologically, residues 293-312 are cytoplasmic; it reads RNKEVKGAFRRKVQKKHFPA.

Belongs to the G-protein coupled receptor 1 family.

The protein localises to the cell membrane. Functionally, potential odorant receptor. The chain is Olfactory receptor 5G29 from Mus musculus (Mouse).